Consider the following 617-residue polypeptide: Probable Xaa-Pro aminopeptidase P (617 aa).

Asp-414, Asp-425, Glu-523, and Glu-537 together coordinate Mn(2+).

The protein belongs to the peptidase M24B family. The cofactor is Mn(2+).

It carries out the reaction Release of any N-terminal amino acid, including proline, that is linked to proline, even from a dipeptide or tripeptide.. Functionally, catalyzes the removal of a penultimate prolyl residue from the N-termini of peptides. In Ajellomyces dermatitidis (strain ER-3 / ATCC MYA-2586) (Blastomyces dermatitidis), this protein is Probable Xaa-Pro aminopeptidase P (AMPP).